The primary structure comprises 181 residues: Interleukin-10 (181 aa).

Residues 1-19 form the signal peptide; it reads MHGSALLCCCLVLLAGVGA. Disulfide bonds link cysteine 31–cysteine 129 and cysteine 81–cysteine 135. N-linked (GlcNAc...) asparagine glycosylation is present at asparagine 137.

The protein belongs to the IL-10 family. In terms of assembly, homodimer. Interacts with IL10RA and IL10RB.

It localises to the secreted. In terms of biological role, major immune regulatory cytokine that acts on many cells of the immune system where it has profound anti-inflammatory functions, limiting excessive tissue disruption caused by inflammation. Mechanistically, IL10 binds to its heterotetrameric receptor comprising IL10RA and IL10RB leading to JAK1 and STAT2-mediated phosphorylation of STAT3. In turn, STAT3 translocates to the nucleus where it drives expression of anti-inflammatory mediators. Targets antigen-presenting cells (APCs) such as macrophages and monocytes and inhibits their release of pro-inflammatory cytokines including granulocyte-macrophage colony-stimulating factor /GM-CSF, granulocyte colony-stimulating factor/G-CSF, IL-1 alpha, IL-1 beta, IL-6, IL-8 and TNF-alpha. Also interferes with antigen presentation by reducing the expression of MHC-class II and co-stimulatory molecules, thereby inhibiting their ability to induce T cell activation. In addition, controls the inflammatory response of macrophages by reprogramming essential metabolic pathways including mTOR signaling. The polypeptide is Interleukin-10 (IL10) (Canis lupus familiaris (Dog)).